We begin with the raw amino-acid sequence, 209 residues long: 3-dehydroquinate dehydratase (209 aa).

Residues Ser-6, 25–27 (ELR), and Arg-55 each bind 3-dehydroquinate. His-109 serves as the catalytic Proton donor/acceptor. The Schiff-base intermediate with substrate role is filled by Lys-134. The 3-dehydroquinate site is built by Arg-172 and Gln-195.

Belongs to the type-I 3-dehydroquinase family. Homodimer.

It catalyses the reaction 3-dehydroquinate = 3-dehydroshikimate + H2O. It participates in metabolic intermediate biosynthesis; chorismate biosynthesis; chorismate from D-erythrose 4-phosphate and phosphoenolpyruvate: step 3/7. In terms of biological role, involved in the third step of the chorismate pathway, which leads to the biosynthesis of aromatic amino acids. Catalyzes the cis-dehydration of 3-dehydroquinate (DHQ) and introduces the first double bond of the aromatic ring to yield 3-dehydroshikimate. The chain is 3-dehydroquinate dehydratase from Methanoregula boonei (strain DSM 21154 / JCM 14090 / 6A8).